The primary structure comprises 87 residues: Conotoxin Cl12.3 (87 aa).

A signal peptide spans 1 to 19 (MKLTCVLVVLLLFLPYGDL). Positions 20-42 (ITNNYIGGAARKVTPWRRNLKTR) are excised as a propeptide.

Belongs to the conotoxin O1 superfamily. Contains 4 disulfide bonds. As to expression, expressed by the venom duct.

The protein localises to the secreted. This is Conotoxin Cl12.3 from Californiconus californicus (California cone).